We begin with the raw amino-acid sequence, 374 residues long: Isopentenyl-diphosphate delta-isomerase (374 aa).

13 to 14 (RK) contributes to the substrate binding site. FMN-binding positions include 71 to 73 (GMT), Ser104, and Asn132. Position 104 to 106 (104 to 106 (SQR)) interacts with substrate. Residue Gln171 coordinates substrate. Glu172 is a Mg(2+) binding site. FMN is bound by residues Lys203, Thr233, 282 to 284 (GMR), and 303 to 304 (AL).

This sequence belongs to the IPP isomerase type 2 family. Homooctamer. Dimer of tetramers. FMN is required as a cofactor. The cofactor is NADPH. Requires Mg(2+) as cofactor.

The protein resides in the cytoplasm. The enzyme catalyses isopentenyl diphosphate = dimethylallyl diphosphate. Its function is as follows. Involved in the biosynthesis of isoprenoids. Catalyzes the 1,3-allylic rearrangement of the homoallylic substrate isopentenyl (IPP) to its allylic isomer, dimethylallyl diphosphate (DMAPP). The sequence is that of Isopentenyl-diphosphate delta-isomerase from Thermococcus kodakarensis (strain ATCC BAA-918 / JCM 12380 / KOD1) (Pyrococcus kodakaraensis (strain KOD1)).